We begin with the raw amino-acid sequence, 330 residues long: Glycerol-3-phosphate dehydrogenase [NAD(P)+] (330 aa).

Residues Trp-11, Arg-31, His-32, and Lys-105 each coordinate NADPH. 2 residues coordinate sn-glycerol 3-phosphate: Lys-105 and Gly-133. Ala-137 serves as a coordination point for NADPH. Sn-glycerol 3-phosphate contacts are provided by Lys-188, Asp-241, Ser-251, Arg-252, and Asn-253. Lys-188 (proton acceptor) is an active-site residue. Arg-252 is a binding site for NADPH. Leu-277 and Glu-279 together coordinate NADPH.

The protein belongs to the NAD-dependent glycerol-3-phosphate dehydrogenase family.

It localises to the cytoplasm. It carries out the reaction sn-glycerol 3-phosphate + NAD(+) = dihydroxyacetone phosphate + NADH + H(+). It catalyses the reaction sn-glycerol 3-phosphate + NADP(+) = dihydroxyacetone phosphate + NADPH + H(+). The protein operates within membrane lipid metabolism; glycerophospholipid metabolism. In terms of biological role, catalyzes the reduction of the glycolytic intermediate dihydroxyacetone phosphate (DHAP) to sn-glycerol 3-phosphate (G3P), the key precursor for phospholipid synthesis. This Orientia tsutsugamushi (strain Boryong) (Rickettsia tsutsugamushi) protein is Glycerol-3-phosphate dehydrogenase [NAD(P)+].